A 533-amino-acid chain; its full sequence is Retinoic acid receptor RXR-beta (533 aa).

The disordered stretch occupies residues 1 to 23; sequence MSWAARPPFLPQRHAAGQCGPVG. The interval 1-204 is modulating; sequence MSWAARPPFL…PGGPGAGKRL (204 aa). Position 25 is an omega-N-methylarginine (Arg-25). The disordered stretch occupies residues 36–181; the sequence is WRRRRPWLDP…GSGPPEDVKP (146 aa). Residues 46–61 show a composition bias toward low complexity; sequence AAAAAAAVAGGEQQTP. Over residues 67-82 the composition is skewed to basic and acidic residues; the sequence is EAGRDGMGDSGRDSRS. 2 stretches are compositionally biased toward pro residues: residues 89 to 109 and 118 to 131; these read NPLP…PPST and APPP…PLGS. Over residues 132 to 143 the composition is skewed to low complexity; it reads PFPVISSSMGSP. Positions 144–153 are enriched in pro residues; the sequence is GLPPPAPPGF. 2 consecutive NR C4-type zinc fingers follow at residues 205-225 and 241-265; these read CAIC…CEGC and CRDN…YQKC. The nuclear receptor DNA-binding region spans 205-270; that stretch reads CAICGDRSSG…RYQKCLATGM (66 aa). The interval 271 to 295 is hinge; the sequence is KREAVQEERQRGKDKDGDGEGAGGA. Over residues 276–288 the composition is skewed to basic and acidic residues; it reads QEERQRGKDKDGD. Disordered stretches follow at residues 276–299 and 313–336; these read QEER…PEEM and QKSD…NDPV. The region spanning 296–529 is the NR LBD domain; it reads PEEMPVDRIL…TFLMEMLEAP (234 aa). The segment covering 320-329 has biased composition (gly residues); that stretch reads EGPGGTGGSG.

This sequence belongs to the nuclear hormone receptor family. NR2 subfamily. As to quaternary structure, homodimer (in vitro). Heterodimer with other retinoic acid receptor family members. Binds DNA preferentially as a RAR/RXR heterodimer. Interacts with NR1H3. Interacts with AKAP13. Expressed in aortic endothelial cells (at protein level). Expressed in monocytes. Expressed in a variety of tumor cell lines.

The protein resides in the nucleus. The protein localises to the cytoplasm. Receptor for retinoic acid. Retinoic acid receptors bind as heterodimers to their target response elements in response to their ligands, all-trans or 9-cis retinoic acid, and regulate gene expression in various biological processes. The RAR/RXR heterodimers bind to the retinoic acid response elements (RARE). The polypeptide is Retinoic acid receptor RXR-beta (RXRB) (Homo sapiens (Human)).